We begin with the raw amino-acid sequence, 298 residues long: Protease HtpX homolog (298 aa).

2 helical membrane-spanning segments follow: residues 15 to 35 and 38 to 58; these read LIMVLFVVILTLVGAGLGYLF and SPWTGIIIALAGSLIYLLIMW. Position 143 (histidine 143) interacts with Zn(2+). The active site involves glutamate 144. Histidine 147 contacts Zn(2+). The next 2 helical transmembrane spans lie at 153 to 173 and 197 to 217; these read ILLSTIGVVLVGVISFISGIA and IIFKVIAIVFVLILGPISASL. Position 227 (glutamate 227) interacts with Zn(2+).

Belongs to the peptidase M48B family. Zn(2+) serves as cofactor.

The protein localises to the cell membrane. This Lactobacillus acidophilus (strain ATCC 700396 / NCK56 / N2 / NCFM) protein is Protease HtpX homolog.